A 1425-amino-acid polypeptide reads, in one-letter code: Zinc finger FYVE domain-containing protein 9 (1425 aa).

Disordered stretches follow at residues glutamate 201 to aspartate 255 and glutamate 291 to asparagine 352. Residues serine 202 to serine 225 show a composition bias toward basic and acidic residues. Polar residues-rich tracts occupy residues cysteine 230–glutamine 245 and lysine 296–histidine 312. Serine 306 and serine 668 each carry phosphoserine. The segment at aspartate 699 to methionine 758 adopts an FYVE-type zinc-finger fold. Zn(2+) is bound by residues cysteine 705, cysteine 708, cysteine 721, cysteine 724, cysteine 729, cysteine 732, cysteine 750, and cysteine 753. The SBD stretch occupies residues methionine 767–arginine 823.

In terms of assembly, interacts (via the SBD region) with SMAD2; the interaction recruits SMAD2 to the TGF-beta receptor and is disrupted by phosphorylation of SMAD2 upon TGF-beta receptor activation. Interacts with SMAD3. Interacts with TGFBR1 and TGFBR2; the interaction recruits SMAD2 to the TGF-beta receptor. Interacts with PML. Ubiquitous. In the brain found primarily in the cerebrovascular smooth muscle cells and reactive astrocytes.

The protein resides in the cytoplasm. The protein localises to the early endosome membrane. Its function is as follows. Early endosomal protein that functions to recruit SMAD2/SMAD3 to intracellular membranes and to the TGF-beta receptor. Plays a significant role in TGF-mediated signaling by regulating the subcellular location of SMAD2 and SMAD3 and modulating the transcriptional activity of the SMAD3/SMAD4 complex. Possibly associated with TGF-beta receptor internalization. The protein is Zinc finger FYVE domain-containing protein 9 (ZFYVE9) of Homo sapiens (Human).